Here is a 113-residue protein sequence, read N- to C-terminus: Ig kappa chain V-II region 7S34.1 (113 aa).

Residues 1–23 are framework-1; that stretch reads DIVMTQTAPSALVTPGESVSISC. Cys23 and Cys93 are disulfide-bonded. Positions 24–39 are complementarity-determining-1; that stretch reads RSSKSLLHSNGNTYLY. Residues 40–54 form a framework-2 region; sequence WFLQRPGQCPQLLIY. A complementarity-determining-2 region spans residues 55-61; that stretch reads RMSNLAS. The interval 62-93 is framework-3; it reads GVPDRFSGSGSGTAFTLRISRVEAEDVGVYYC. The tract at residues 94–102 is complementarity-determining-3; the sequence is MQQREYPYT. A framework-4 region spans residues 103–112; sequence FGGGTKLEIK.

This chain is Ig kappa chain V-II region 7S34.1, found in Mus musculus (Mouse).